A 94-amino-acid chain; its full sequence is Aspartyl/glutamyl-tRNA(Asn/Gln) amidotransferase subunit C (94 aa).

This sequence belongs to the GatC family. In terms of assembly, heterotrimer of A, B and C subunits.

The enzyme catalyses L-glutamyl-tRNA(Gln) + L-glutamine + ATP + H2O = L-glutaminyl-tRNA(Gln) + L-glutamate + ADP + phosphate + H(+). It carries out the reaction L-aspartyl-tRNA(Asn) + L-glutamine + ATP + H2O = L-asparaginyl-tRNA(Asn) + L-glutamate + ADP + phosphate + 2 H(+). Allows the formation of correctly charged Asn-tRNA(Asn) or Gln-tRNA(Gln) through the transamidation of misacylated Asp-tRNA(Asn) or Glu-tRNA(Gln) in organisms which lack either or both of asparaginyl-tRNA or glutaminyl-tRNA synthetases. The reaction takes place in the presence of glutamine and ATP through an activated phospho-Asp-tRNA(Asn) or phospho-Glu-tRNA(Gln). The chain is Aspartyl/glutamyl-tRNA(Asn/Gln) amidotransferase subunit C from Nitratidesulfovibrio vulgaris (strain ATCC 29579 / DSM 644 / CCUG 34227 / NCIMB 8303 / VKM B-1760 / Hildenborough) (Desulfovibrio vulgaris).